The following is a 221-amino-acid chain: Putative efflux system component YhbJ (221 aa).

The chain crosses the membrane as a helical span at residues L17–Y37.

This sequence belongs to the membrane fusion protein (MFP) (TC 8.A.1) family.

Its subcellular location is the cell membrane. This chain is Putative efflux system component YhbJ (yhbJ), found in Bacillus subtilis (strain 168).